Here is a 224-residue protein sequence, read N- to C-terminus: dTTP/UTP pyrophosphatase (224 aa).

D77 (proton acceptor) is an active-site residue.

The protein belongs to the Maf family. YhdE subfamily. It depends on a divalent metal cation as a cofactor.

The protein resides in the cytoplasm. The enzyme catalyses dTTP + H2O = dTMP + diphosphate + H(+). It catalyses the reaction UTP + H2O = UMP + diphosphate + H(+). In terms of biological role, nucleoside triphosphate pyrophosphatase that hydrolyzes dTTP and UTP. May have a dual role in cell division arrest and in preventing the incorporation of modified nucleotides into cellular nucleic acids. This Dehalococcoides mccartyi (strain ATCC BAA-2100 / JCM 16839 / KCTC 5957 / BAV1) protein is dTTP/UTP pyrophosphatase.